A 538-amino-acid chain; its full sequence is Bifunctional purine biosynthesis protein PurH (538 aa).

An MGS-like domain is found at 8–158; sequence IPAPDKVKIR…KNHAYVTVVT (151 aa).

It belongs to the PurH family.

The catalysed reaction is (6R)-10-formyltetrahydrofolate + 5-amino-1-(5-phospho-beta-D-ribosyl)imidazole-4-carboxamide = 5-formamido-1-(5-phospho-D-ribosyl)imidazole-4-carboxamide + (6S)-5,6,7,8-tetrahydrofolate. It catalyses the reaction IMP + H2O = 5-formamido-1-(5-phospho-D-ribosyl)imidazole-4-carboxamide. Its pathway is purine metabolism; IMP biosynthesis via de novo pathway; 5-formamido-1-(5-phospho-D-ribosyl)imidazole-4-carboxamide from 5-amino-1-(5-phospho-D-ribosyl)imidazole-4-carboxamide (10-formyl THF route): step 1/1. It functions in the pathway purine metabolism; IMP biosynthesis via de novo pathway; IMP from 5-formamido-1-(5-phospho-D-ribosyl)imidazole-4-carboxamide: step 1/1. This is Bifunctional purine biosynthesis protein PurH from Agrobacterium fabrum (strain C58 / ATCC 33970) (Agrobacterium tumefaciens (strain C58)).